The chain runs to 130 residues: Large ribosomal subunit protein bL21 (130 aa).

This sequence belongs to the bacterial ribosomal protein bL21 family. In terms of assembly, part of the 50S ribosomal subunit. Contacts protein L20.

In terms of biological role, this protein binds to 23S rRNA in the presence of protein L20. The protein is Large ribosomal subunit protein bL21 of Trichormus variabilis (strain ATCC 29413 / PCC 7937) (Anabaena variabilis).